The sequence spans 65 residues: Large ribosomal subunit protein bL35 (65 aa).

The disordered stretch occupies residues 1–65 (MPKIKTNRAA…GRLDRMLPYL (65 aa)). A compositionally biased stretch (basic residues) spans 10-44 (AAKRFRKTASGKYKAGHANRSHILTKKATKRKRNL). A compositionally biased stretch (basic and acidic residues) spans 50–65 (VRAEDAGRLDRMLPYL).

It belongs to the bacterial ribosomal protein bL35 family.

The polypeptide is Large ribosomal subunit protein bL35 (Xylella fastidiosa (strain M23)).